The sequence spans 147 residues: Diaminohydroxyphosphoribosylamino-pyrimidine deaminase (147 aa).

The 123-residue stretch at 1-123 (MNDIFYMKRA…YLKKHGICVK (123 aa)) folds into the CMP/dCMP-type deaminase domain. H50 provides a ligand contact to Zn(2+). The Proton donor role is filled by E52. Positions 75 and 84 each coordinate Zn(2+).

This sequence belongs to the cytidine and deoxycytidylate deaminase family. Zn(2+) is required as a cofactor.

It carries out the reaction 2,5-diamino-6-hydroxy-4-(5-phosphoribosylamino)-pyrimidine + H2O + H(+) = 5-amino-6-(5-phospho-D-ribosylamino)uracil + NH4(+). It functions in the pathway cofactor biosynthesis; riboflavin biosynthesis; 5-amino-6-(D-ribitylamino)uracil from GTP: step 2/4. The sequence is that of Diaminohydroxyphosphoribosylamino-pyrimidine deaminase (ribD1) from Buchnera aphidicola subsp. Acyrthosiphon pisum (strain APS) (Acyrthosiphon pisum symbiotic bacterium).